Consider the following 289-residue polypeptide: Diaminopimelate epimerase (289 aa).

The substrate site is built by Asn11 and Asn78. Catalysis depends on Cys87, which acts as the Proton donor. Residues 88 to 89 (GN), Asn163, Asn199, and 217 to 218 (ER) each bind substrate. The active-site Proton acceptor is Cys226. 227-228 (GT) serves as a coordination point for substrate.

The protein belongs to the diaminopimelate epimerase family. Homodimer.

The protein resides in the cytoplasm. It catalyses the reaction (2S,6S)-2,6-diaminopimelate = meso-2,6-diaminopimelate. Its pathway is amino-acid biosynthesis; L-lysine biosynthesis via DAP pathway; DL-2,6-diaminopimelate from LL-2,6-diaminopimelate: step 1/1. Its function is as follows. Catalyzes the stereoinversion of LL-2,6-diaminopimelate (L,L-DAP) to meso-diaminopimelate (meso-DAP), a precursor of L-lysine and an essential component of the bacterial peptidoglycan. The sequence is that of Diaminopimelate epimerase from Rhodococcus opacus (strain B4).